Reading from the N-terminus, the 130-residue chain is Small ribosomal subunit protein uS9 (130 aa).

Belongs to the universal ribosomal protein uS9 family.

The polypeptide is Small ribosomal subunit protein uS9 (Ectopseudomonas mendocina (strain ymp) (Pseudomonas mendocina)).